Here is a 175-residue protein sequence, read N- to C-terminus: B9 domain-containing protein 2 (175 aa).

In terms of domain architecture, C2 B9-type spans 2 to 118 (AELHIIGQII…QCVTWRPLGS (117 aa)).

It belongs to the B9D family. Part of the tectonic-like complex (also named B9 complex).

It is found in the cytoplasm. The protein resides in the cytoskeleton. It localises to the cilium basal body. Its subcellular location is the cilium axoneme. In terms of biological role, component of the tectonic-like complex, a complex localized at the transition zone of primary cilia and acting as a barrier that prevents diffusion of transmembrane proteins between the cilia and plasma membranes. In Danio rerio (Zebrafish), this protein is B9 domain-containing protein 2 (b9d2).